Consider the following 1122-residue polypeptide: Maestro heat-like repeat-containing protein family member 7 (1122 aa).

2 disordered regions span residues Met1–Asp144 and Ser183–Leu203. A compositionally biased stretch (low complexity) spans Thr33–Pro65. Composition is skewed to polar residues over residues Asp75–Ala95, Pro120–Asn136, and His184–Leu203. N-linked (GlcNAc...) asparagine glycans are attached at residues Asn200, Asn210, Asn255, Asn267, and Asn296. The interval Trp246 to Gly265 is disordered. Residue Ser356 is modified to Phosphoserine. The segment at Phe363 to Asp385 is disordered. Residues Glu372–Asp385 are compositionally biased toward basic and acidic residues. N-linked (GlcNAc...) asparagine glycosylation is found at Asn541 and Asn546. 2 consecutive transmembrane segments (helical) span residues Thr548–Gly568 and Leu722–Met742. 4 HEAT repeats span residues Gln913 to Val950, Thr992 to Lys1029, Ser1035 to Met1072, and Glu1080 to Leu1117.

Its subcellular location is the membrane. The sequence is that of Maestro heat-like repeat-containing protein family member 7 (Mroh7) from Rattus norvegicus (Rat).